Here is a 1792-residue protein sequence, read N- to C-terminus: Non-reducing polyketide synthase aptA (1792 aa).

The tract at residues 1–395 (MKDNTHSTTL…PRSFAHSKLA (395 aa)) is N-terminal acylcarrier protein transacylase domain (SAT). The Ketosynthase family 3 (KS3) domain occupies 391–824 (HSKLAVVGMA…GGNTTVLLED (434 aa)). Active-site for beta-ketoacyl synthase activity residues include Cys564, His699, and His742. The tract at residues 926 to 1243 (VFAFTGQGAF…NLVALHLAGC (318 aa)) is malonyl-CoA:ACP transacylase (MAT) domain. The segment at 1308-1625 (TSLIHEIIEE…PRLLMDRFFS (318 aa)) is product template (PT) domain. An N-terminal hotdog fold region spans residues 1312–1447 (HEIIEETIGE…GSVRFEADAE (136 aa)). A PKS/mFAS DH domain is found at 1312 to 1621 (HEIIEETIGE…FRRVPRLLMD (310 aa)). The active-site Proton acceptor; for dehydratase activity is the His1344. Residues 1475 to 1621 (QASQLSKALS…FRRVPRLLMD (147 aa)) are C-terminal hotdog fold. Residue Asp1533 is the Proton donor; for dehydratase activity of the active site. Positions 1634 to 1649 (VAASASSAPKTATKHA) are enriched in low complexity. Residues 1634–1716 (VAASASSAPK…GPNGTTSQPE (83 aa)) are disordered. A compositionally biased stretch (polar residues) spans 1664–1684 (TPSSLPTVQAQNTSPPQQVTP). The segment covering 1694–1705 (TPEEEKPGKADA) has biased composition (basic and acidic residues). The region spanning 1715–1792 (PEATGVVGQC…DMMDWLEQYC (78 aa)) is the Carrier domain. Residue Ser1752 is modified to O-(pantetheine 4'-phosphoryl)serine.

The cofactor is pantetheine 4'-phosphate.

The catalysed reaction is holo-[ACP] + 8 malonyl-CoA + acetyl-CoA + 8 H(+) = 3,6,8,9-tetrahydroxy-1-oxo-3-(2-oxopropyl)-1,2,3,4-tetrahydroanthracene-2-carboxyl-[ACP] + 8 CO2 + 9 CoA + 2 H2O. The protein operates within secondary metabolite biosynthesis. Functionally, non-reducing polyketide synthase (NRPKS); part of the gene cluster that mediates the biosynthesis of asperthecin, an anthraquinone pigment. Catalyzes the formation of the aromatic polyketide from acetyl coenzyme A and seven malonyl coenzyme A molecules. Through its product template (PT) domain, catalyzes the cyclization of the polyketide backbone via C6-C11 aldolcondensation. Polyketide is subsequently hydrolyzed from the NRPKS by the action of the hydrolase aptB into endocrocin-9-anthrone. Endocrocin-9-anthrone is then oxidized into endocrocin by aptC. Endocrocin is likely to decarboxylate spontaneously to form emodin which explains why there is no decarboxylase in the asperthecin biosynthesis cluster. Finally, aptC or another endogenous oxygenase catalyzes additional oxidation steps to form asperthecin. This chain is Non-reducing polyketide synthase aptA, found in Emericella nidulans (strain FGSC A4 / ATCC 38163 / CBS 112.46 / NRRL 194 / M139) (Aspergillus nidulans).